A 652-amino-acid chain; its full sequence is DNA ligase (652 aa).

NAD(+)-binding positions include 30–34 (DEVYD), 79–80 (SL), and Glu-108. Lys-110 (N6-AMP-lysine intermediate) is an active-site residue. NAD(+)-binding residues include Arg-131, Glu-165, Lys-280, and Lys-304. The Zn(2+) site is built by Cys-398, Cys-401, Cys-414, and Cys-419. A BRCT domain is found at 574–652 (AKENPFKGKS…DEMRSKIEQA (79 aa)).

Belongs to the NAD-dependent DNA ligase family. LigA subfamily. It depends on Mg(2+) as a cofactor. Requires Mn(2+) as cofactor.

The catalysed reaction is NAD(+) + (deoxyribonucleotide)n-3'-hydroxyl + 5'-phospho-(deoxyribonucleotide)m = (deoxyribonucleotide)n+m + AMP + beta-nicotinamide D-nucleotide.. Its function is as follows. DNA ligase that catalyzes the formation of phosphodiester linkages between 5'-phosphoryl and 3'-hydroxyl groups in double-stranded DNA using NAD as a coenzyme and as the energy source for the reaction. It is essential for DNA replication and repair of damaged DNA. The sequence is that of DNA ligase from Sulfurimonas denitrificans (strain ATCC 33889 / DSM 1251) (Thiomicrospira denitrificans (strain ATCC 33889 / DSM 1251)).